Consider the following 275-residue polypeptide: Large ribosomal subunit protein uL2 (275 aa).

Positions 223–275 (AAMNANDHPHGGGEAKAGQGNPHPVTPWGVPTKGYKTRKNKRTQQFIVRDRRG) are disordered.

Belongs to the universal ribosomal protein uL2 family. Part of the 50S ribosomal subunit. Forms a bridge to the 30S subunit in the 70S ribosome.

One of the primary rRNA binding proteins. Required for association of the 30S and 50S subunits to form the 70S ribosome, for tRNA binding and peptide bond formation. It has been suggested to have peptidyltransferase activity; this is somewhat controversial. Makes several contacts with the 16S rRNA in the 70S ribosome. This is Large ribosomal subunit protein uL2 from Xanthomonas campestris pv. campestris (strain 8004).